Consider the following 86-residue polypeptide: MAEVKIFMVRGTAIFSASRFPTSQKFTKYVRALNEKQAIEYIYSQLGGKNKIKRYNIHIQEIKEVKEDEITDKTIRDLAKLDKIIM.

The protein belongs to the eukaryotic ribosomal protein eL20 family. As to quaternary structure, part of the 50S ribosomal subunit. Binds 23S rRNA.

The protein is Large ribosomal subunit protein eL20 of Sulfolobus acidocaldarius (strain ATCC 33909 / DSM 639 / JCM 8929 / NBRC 15157 / NCIMB 11770).